Reading from the N-terminus, the 335-residue chain is L-tyrosine isonitrile synthase (335 aa).

The protein belongs to the isocyanide synthase family.

The enzyme catalyses D-ribulose 5-phosphate + L-tyrosine = (2S)-3-(4-hydroxyphenyl)-2-isocyanopropanoate + hydroxyacetone + formaldehyde + phosphate + H2O + H(+). Involved in the biosynthesis of rhabduscin, a tyrosine derivative which is a potent inhibitor of phenoloxidase, a key component of the insect's innate immune system. Responsible for the synthesis of the isonitrile group on tyrosine using the C2 of ribulose 5-phosphate as the source of the carbon atom. This chain is L-tyrosine isonitrile synthase, found in Xenorhabdus nematophila (strain ATCC 19061 / DSM 3370 / CCUG 14189 / LMG 1036 / NCIMB 9965 / AN6).